We begin with the raw amino-acid sequence, 241 residues long: Pre-rRNA-processing protein pno1 (241 aa).

The interval alanine 48–proline 71 is disordered. A Phosphothreonine modification is found at threonine 52. Positions glycine 162 to valine 214 constitute a KH domain.

It belongs to the PNO1 family. In terms of assembly, component of the small ribosomal subunit, ribosomal RNA processing complex (SSU RRP complex).

It localises to the cytoplasm. Its subcellular location is the nucleus. The protein resides in the nucleolus. Its function is as follows. Required for small ribosomal subunit (SSU) synthesis. Has a role in the processing of early nucleolar and late cytoplasmic pre-RNA species. This is Pre-rRNA-processing protein pno1 (rbp28) from Schizosaccharomyces pombe (strain 972 / ATCC 24843) (Fission yeast).